Consider the following 129-residue polypeptide: Small ribosomal subunit protein uS9 (129 aa).

Belongs to the universal ribosomal protein uS9 family.

The sequence is that of Small ribosomal subunit protein uS9 (rps9) from Thermoplasma acidophilum (strain ATCC 25905 / DSM 1728 / JCM 9062 / NBRC 15155 / AMRC-C165).